The sequence spans 55 residues: Large ribosomal subunit protein bL33A (55 aa).

This sequence belongs to the bacterial ribosomal protein bL33 family.

The protein is Large ribosomal subunit protein bL33A of Mycolicibacterium vanbaalenii (strain DSM 7251 / JCM 13017 / BCRC 16820 / KCTC 9966 / NRRL B-24157 / PYR-1) (Mycobacterium vanbaalenii).